Here is a 53-residue protein sequence, read N- to C-terminus: uncharacterized protein (53 aa).

This is an uncharacterized protein from Archaeoglobus fulgidus (strain ATCC 49558 / DSM 4304 / JCM 9628 / NBRC 100126 / VC-16).